The sequence spans 205 residues: Protein phosphatase inhibitor 2 family member B (205 aa).

Positions 1–44 (MAASTASHRPIKGILKNKTSTTSSMVASAEQPRRSVDEELSKKS) are disordered. N-acetylalanine is present on Ala2. Required for binding PPP1CC stretches follow at residues 12–17 (KGILKN) and 43–55 (KSQK…ILAT). Polar residues predominate over residues 17 to 26 (NKTSTTSSMV). The segment covering 31–44 (QPRRSVDEELSKKS) has biased composition (basic and acidic residues). Position 44 is a phosphoserine (Ser44). A phosphothreonine mark is found at Thr89 and Thr92. The disordered stretch occupies residues 111 to 142 (EPKYRIQEQESSGEEDSDLSPEEREKKRQFEM). Ser121, Ser122, Ser127, and Ser130 each carry phosphoserine. Residues 121-130 (SSGEEDSDLS) show a composition bias toward acidic residues. The segment covering 131 to 142 (PEEREKKRQFEM) has biased composition (basic and acidic residues). The tract at residues 147 to 150 (HYNE) is required for binding PPP1CC catalytic center, displacing metal ions and inhibition of PPP1CC catalytic activity. The tract at residues 163–205 (KDLHDDDEDEEMLETADGESMNTEESNQGSTPSDQQQNKLRSS) is disordered. The segment covering 167–179 (DDDEDEEMLETAD) has biased composition (acidic residues). Positions 182-205 (SMNTEESNQGSTPSDQQQNKLRSS) are enriched in polar residues.

The protein belongs to the protein phosphatase inhibitor 2 family. Interacts with PPP1CC. In terms of tissue distribution, only detected in spermatozoa, both heads and tails.

Inhibitor of protein-phosphatase 1. The sequence is that of Protein phosphatase inhibitor 2 family member B from Homo sapiens (Human).